Reading from the N-terminus, the 129-residue chain is Transcription antitermination protein NusB (129 aa).

The protein belongs to the NusB family.

Involved in transcription antitermination. Required for transcription of ribosomal RNA (rRNA) genes. Binds specifically to the boxA antiterminator sequence of the ribosomal RNA (rrn) operons. The polypeptide is Transcription antitermination protein NusB (Staphylococcus aureus (strain N315)).